Here is a 361-residue protein sequence, read N- to C-terminus: 4-oxalomesaconate tautomerase (361 aa).

It belongs to the PrpF family.

It carries out the reaction (1E)-4-oxobut-1-ene-1,2,4-tricarboxylate = 4-carboxy-2-hydroxy-cis,cis-muconate. In terms of biological role, catalyzes the tautomerization of the 4-oxalomesaconic acid keto (OMAketo) generated by GalA dioxygenase to 4-oxalomesaconic acid enol (OMAenol). Mediates the second step in gallate degradation pathway. The polypeptide is 4-oxalomesaconate tautomerase (galD) (Pseudomonas putida (strain ATCC 47054 / DSM 6125 / CFBP 8728 / NCIMB 11950 / KT2440)).